A 271-amino-acid polypeptide reads, in one-letter code: Formamidopyrimidine-DNA glycosylase (271 aa).

The active-site Schiff-base intermediate with DNA is proline 2. Glutamate 3 functions as the Proton donor in the catalytic mechanism. The Proton donor; for beta-elimination activity role is filled by lysine 56. DNA-binding residues include histidine 89, arginine 107, and arginine 151. Residues 236–270 (MVYDRAGLPCRVCAAPIKSIRQGQRSSFYCATCQK) form an FPG-type zinc finger. The Proton donor; for delta-elimination activity role is filled by arginine 260.

The protein belongs to the FPG family. In terms of assembly, monomer. Zn(2+) serves as cofactor.

It catalyses the reaction Hydrolysis of DNA containing ring-opened 7-methylguanine residues, releasing 2,6-diamino-4-hydroxy-5-(N-methyl)formamidopyrimidine.. The catalysed reaction is 2'-deoxyribonucleotide-(2'-deoxyribose 5'-phosphate)-2'-deoxyribonucleotide-DNA = a 3'-end 2'-deoxyribonucleotide-(2,3-dehydro-2,3-deoxyribose 5'-phosphate)-DNA + a 5'-end 5'-phospho-2'-deoxyribonucleoside-DNA + H(+). Its function is as follows. Involved in base excision repair of DNA damaged by oxidation or by mutagenic agents. Acts as a DNA glycosylase that recognizes and removes damaged bases. Has a preference for oxidized purines, such as 7,8-dihydro-8-oxoguanine (8-oxoG). Has AP (apurinic/apyrimidinic) lyase activity and introduces nicks in the DNA strand. Cleaves the DNA backbone by beta-delta elimination to generate a single-strand break at the site of the removed base with both 3'- and 5'-phosphates. In Polaromonas naphthalenivorans (strain CJ2), this protein is Formamidopyrimidine-DNA glycosylase.